Reading from the N-terminus, the 316-residue chain is ATP synthase gamma chain (316 aa).

Belongs to the ATPase gamma chain family. As to quaternary structure, F-type ATPases have 2 components, CF(1) - the catalytic core - and CF(0) - the membrane proton channel. CF(1) has five subunits: alpha(3), beta(3), gamma(1), delta(1), epsilon(1). CF(0) has three main subunits: a, b and c.

It is found in the cellular thylakoid membrane. In terms of biological role, produces ATP from ADP in the presence of a proton gradient across the membrane. The gamma chain is believed to be important in regulating ATPase activity and the flow of protons through the CF(0) complex. This Prochlorococcus marinus (strain MIT 9211) protein is ATP synthase gamma chain.